A 514-amino-acid chain; its full sequence is 2-isopropylmalate synthase (514 aa).

The region spanning 5 to 268 (LIIFDTTLRD…DVGIDTTQIV (264 aa)) is the Pyruvate carboxyltransferase domain. Positions 14, 202, 204, and 239 each coordinate Mn(2+). The regulatory domain stretch occupies residues 395-514 (KFVSLSQHSE…KDDKLNPQRS (120 aa)).

This sequence belongs to the alpha-IPM synthase/homocitrate synthase family. LeuA type 1 subfamily. As to quaternary structure, homodimer. Mn(2+) serves as cofactor.

The protein resides in the cytoplasm. It catalyses the reaction 3-methyl-2-oxobutanoate + acetyl-CoA + H2O = (2S)-2-isopropylmalate + CoA + H(+). Its pathway is amino-acid biosynthesis; L-leucine biosynthesis; L-leucine from 3-methyl-2-oxobutanoate: step 1/4. Functionally, catalyzes the condensation of the acetyl group of acetyl-CoA with 3-methyl-2-oxobutanoate (2-ketoisovalerate) to form 3-carboxy-3-hydroxy-4-methylpentanoate (2-isopropylmalate). The sequence is that of 2-isopropylmalate synthase from Burkholderia multivorans (strain ATCC 17616 / 249).